A 413-amino-acid chain; its full sequence is Ureide permease 5 (413 aa).

The Extracellular portion of the chain corresponds to 1-18 (MMIAQELGIYVVESKGGA). A helical membrane pass occupies residues 19 to 39 (ILCLLLSLLCLGTWPALMALL). At 40–50 (ERRGRLPQHTY) the chain is on the cytoplasmic side. Residues 51–71 (LDYSITNFLAAIFIAFVFGGI) form a helical membrane-spanning segment. Topologically, residues 72-91 (GESTHEAPSFITQLTQIQDN) are extracellular. Residues 92–112 (WPSVLFAMAGGVGLSIGNLAT) traverse the membrane as a helical segment. At 113–115 (QYS) the chain is on the cytoplasmic side. The chain crosses the membrane as a helical span at residues 116 to 136 (LAFVGLSVTEVTAASITVVVG). The Extracellular portion of the chain corresponds to 137–149 (TTVNYFLDNGLNR). Residues 150 to 170 (ADILFSGVGCFMVAVCLGSAV) form a helical membrane-spanning segment. At 171–240 (HSSNSADIKA…RAIKVLGKSM (70 aa)) the chain is on the cytoplasmic side. 232-239 (AIKVLGKS) contacts ATP. A helical membrane pass occupies residues 241–261 (VVGLGITFFAGLSFSLFSPLF). The Extracellular portion of the chain corresponds to 262 to 278 (NLATNDQWHTLKQGVPK). Residues 279-299 (LIVYTAFFYFSLSCFVIAVAL) form a helical membrane-spanning segment. The Cytoplasmic portion of the chain corresponds to 300–326 (NISFLYKPVLDSPRSSFREYLSDWNGR). Residues 327–347 (GWALAAGLLCGFGNGLQFMGG) traverse the membrane as a helical segment. Topologically, residues 348–352 (QAAGY) are extracellular. A helical transmembrane segment spans residues 353–373 (AASDAVQALPLVSTFWGIYLF). At 374–384 (GEYRRSSTRTY) the chain is on the cytoplasmic side. Residues 385-405 (ALLVGMLVMFTVAVGLLMASA) traverse the membrane as a helical segment. The Extracellular segment spans residues 406-413 (GERETRFT).

This sequence belongs to the plant ureide permease (TC 2.A.7.19) family. In terms of tissue distribution, expressed in lateral roots, rosette leaves, stems, stipules, flower stigma, pedicels and the connective tissue between pollen sacks.

Its subcellular location is the membrane. In terms of biological role, proton-coupled transporter that transports a wide spectrum of oxo derivatives of heterocyclic nitrogen compounds, including allantoin, uric acid and xanthine, but not adenine. Mediates transport of uracil and 5-fluorouracil (a toxic uracil analog). Its function is as follows. Proton-coupled transporter that transports a wide spectrum of oxo derivatives of heterocyclic nitrogen compounds, including allantoin, xanthine and uracil. This is Ureide permease 5 from Arabidopsis thaliana (Mouse-ear cress).